We begin with the raw amino-acid sequence, 436 residues long: Arginine biosynthesis bifunctional protein ArgJ, mitochondrial (436 aa).

Residues threonine 172, lysine 198, threonine 209, glutamate 298, asparagine 431, and serine 436 each contribute to the substrate site. Residue threonine 209 is the Nucleophile of the active site.

The protein belongs to the ArgJ family. Heterodimer of an alpha and a beta chain. In terms of processing, the alpha and beta chains are autoproteolytically processed from a single precursor protein within the mitochondrion.

It is found in the mitochondrion matrix. The catalysed reaction is N(2)-acetyl-L-ornithine + L-glutamate = N-acetyl-L-glutamate + L-ornithine. It catalyses the reaction L-glutamate + acetyl-CoA = N-acetyl-L-glutamate + CoA + H(+). It participates in amino-acid biosynthesis; L-arginine biosynthesis; L-ornithine and N-acetyl-L-glutamate from L-glutamate and N(2)-acetyl-L-ornithine (cyclic): step 1/1. Its pathway is amino-acid biosynthesis; L-arginine biosynthesis; N(2)-acetyl-L-ornithine from L-glutamate: step 1/4. Its function is as follows. Catalyzes two activities which are involved in the cyclic version of arginine biosynthesis: the synthesis of acetylglutamate from glutamate and acetyl-CoA, and of ornithine by transacetylation between acetylornithine and glutamate. The chain is Arginine biosynthesis bifunctional protein ArgJ, mitochondrial from Meyerozyma guilliermondii (strain ATCC 6260 / CBS 566 / DSM 6381 / JCM 1539 / NBRC 10279 / NRRL Y-324) (Yeast).